The sequence spans 443 residues: Delta(6)-fatty-acid desaturase fat-3 (443 aa).

Residues 1-71 form the Cytochrome b5 heme-binding domain; the sequence is MVVDKNASGL…DLLKKHGEHD (71 aa). The next 3 helical transmembrane spans lie at 136–156, 296–316, and 318–338; these read IMAF…ACLL, TIVG…TWPL, and VAYF…VVTF.

Belongs to the fatty acid desaturase type 1 family.

It localises to the membrane. It carries out the reaction (9Z,12Z)-octadecadienoyl-CoA + 2 Fe(II)-[cytochrome b5] + O2 + 2 H(+) = (6Z,9Z,12Z)-octadecatrienoyl-CoA + 2 Fe(III)-[cytochrome b5] + 2 H2O. The catalysed reaction is (9Z,12Z,15Z)-octadecatrienoyl-CoA + 2 Fe(II)-[cytochrome b5] + O2 + 2 H(+) = (6Z,9Z,12Z,15Z)-octadecatetraenoyl-CoA + 2 Fe(III)-[cytochrome b5] + 2 H2O. The protein operates within lipid metabolism; polyunsaturated fatty acid biosynthesis. Its function is as follows. Can function as a Delta(6) fatty acid desaturase. Introduces a double bond in the fatty acid chain 6 carbons away from carboxy terminal to biosynthesize polyunsaturated fatty acids (PUFAs) endogenously (PUFAs are essential for membrane structure and many cellular and physiological processes). Acts on a variety of substrates such as linoleoyl-CoA ((9Z,12Z)-octadecadienoyl-CoA, C18:2n-6) and alpha-linolenoyl-CoA ((9Z,12Z,15Z)-octadecatrienoyl-CoA, C18:3n-3) to produce gamma-linolenoyl-CoA ((6Z,9Z,12Z)-octadecatrienoyl-CoA, C18:3n-6) and (6Z,9Z,12Z,15Z)-octadecatetraenoyl-CoA (18:4n-3) respectively. Unlike plants, Caenorhabditis elegans desaturases seem to use fatty acyl-CoAs as substrates. Plays a role in synaptic vesicle recycling by regulating synaptojanin unc-26 localization at synapses. The protein is Delta(6)-fatty-acid desaturase fat-3 (fat-3) of Caenorhabditis elegans.